Here is a 373-residue protein sequence, read N- to C-terminus: WAT1-related protein At4g08300 (373 aa).

Helical transmembrane passes span 11 to 31 (PIIAIISLQFGYAGMYIITMV), 41 to 61 (ILATYRHVVATIVIAPFALIL), 67 to 87 (PKMTWPLFLRILALGFLEPLL), 102 to 122 (TYSSAFVNALPAITFIMAVIF), 139 to 159 (IGTAITVGGAMVMTLYKGPAI), 185 to 205 (WVTGTLAVMGSITTWAGFFIL), 219 to 239 (LVMWICAMGTVLNTIASLIMV), 255 to 275 (AAVYSGVVCSGMAYYIQSIVI), 281 to 301 (VFTTSFSPMCMIITAFLGVLV), and 306 to 326 (IHLGSIIGAIFIVFGLYSVVW). 2 EamA domains span residues 23-151 (AGMY…AMVM) and 198-325 (TWAG…YSVV).

Belongs to the drug/metabolite transporter (DMT) superfamily. Plant drug/metabolite exporter (P-DME) (TC 2.A.7.4) family.

It is found in the membrane. The sequence is that of WAT1-related protein At4g08300 from Arabidopsis thaliana (Mouse-ear cress).